Here is a 243-residue protein sequence, read N- to C-terminus: Undecaprenyl-phosphate mannosyltransferase (243 aa).

The protein belongs to the glycosyltransferase 2 family.

The catalysed reaction is di-trans,octa-cis-undecaprenyl phosphate + GDP-alpha-D-mannose = D-mannosyl di-trans,octa-cis-undecaprenyl phosphate + GDP. Its function is as follows. Catalyzes the transfer of mannose from GDP-mannose to D-mannosyl-1-phosphoundecaprenol. The chain is Undecaprenyl-phosphate mannosyltransferase from Micrococcus luteus (strain ATCC 4698 / DSM 20030 / JCM 1464 / CCM 169 / CCUG 5858 / IAM 1056 / NBRC 3333 / NCIMB 9278 / NCTC 2665 / VKM Ac-2230) (Micrococcus lysodeikticus).